A 55-amino-acid polypeptide reads, in one-letter code: MPQLNPNPWFFTMLTTWLTFLLLIQPKLLSFIMTNPPINKSSKHTKTPSWTWPWT.

Residues 10–32 (FFTMLTTWLTFLLLIQPKLLSFI) traverse the membrane as a helical segment.

The protein belongs to the ATPase protein 8 family. As to quaternary structure, component of the ATP synthase complex composed at least of ATP5F1A/subunit alpha, ATP5F1B/subunit beta, ATP5MC1/subunit c (homooctomer), MT-ATP6/subunit a, MT-ATP8/subunit 8, ATP5ME/subunit e, ATP5MF/subunit f, ATP5MG/subunit g, ATP5MK/subunit k, ATP5MJ/subunit j, ATP5F1C/subunit gamma, ATP5F1D/subunit delta, ATP5F1E/subunit epsilon, ATP5PF/subunit F6, ATP5PB/subunit b, ATP5PD/subunit d, ATP5PO/subunit OSCP. ATP synthase complex consists of a soluble F(1) head domain (subunits alpha(3) and beta(3)) - the catalytic core - and a membrane F(0) domain - the membrane proton channel (subunits c, a, 8, e, f, g, k and j). These two domains are linked by a central stalk (subunits gamma, delta, and epsilon) rotating inside the F1 region and a stationary peripheral stalk (subunits F6, b, d, and OSCP).

The protein localises to the mitochondrion membrane. Subunit 8, of the mitochondrial membrane ATP synthase complex (F(1)F(0) ATP synthase or Complex V) that produces ATP from ADP in the presence of a proton gradient across the membrane which is generated by electron transport complexes of the respiratory chain. ATP synthase complex consist of a soluble F(1) head domain - the catalytic core - and a membrane F(1) domain - the membrane proton channel. These two domains are linked by a central stalk rotating inside the F(1) region and a stationary peripheral stalk. During catalysis, ATP synthesis in the catalytic domain of F(1) is coupled via a rotary mechanism of the central stalk subunits to proton translocation. In vivo, can only synthesize ATP although its ATP hydrolase activity can be activated artificially in vitro. Part of the complex F(0) domain. In Guira guira (Guira cuckoo), this protein is ATP synthase F(0) complex subunit 8.